Consider the following 218-residue polypeptide: GEM-like protein 6 (218 aa).

The 79-residue stretch at Lys96–Gln174 folds into the GRAM domain.

The protein belongs to the GEM family.

This Arabidopsis thaliana (Mouse-ear cress) protein is GEM-like protein 6.